A 119-amino-acid polypeptide reads, in one-letter code: Transcription and mRNA export factor SUS1 (119 aa).

It belongs to the ENY2 family. In terms of assembly, component of the nuclear pore complex (NPC)-associated TREX-2 complex (transcription and export complex 2), composed of at least SUS1, SAC3, THP1, SEM1, and CDC31. TREX-2 contains 2 SUS1 chains. The TREX-2 complex interacts with the nucleoporin NUP1. Component of the 1.8 MDa SAGA transcription coactivator-HAT complex. SAGA is built of 5 distinct domains with specialized functions. Within the SAGA complex, SUS1, SGF11, SGF73 and UBP8 form an additional subcomplex of SAGA called the DUB module (deubiquitination module). Interacts directly with THP1, SAC3, SGF11, and with the RNA polymerase II.

It is found in the nucleus. The protein resides in the nucleoplasm. The protein localises to the cytoplasm. It localises to the P-body. In terms of biological role, involved in mRNA export coupled transcription activation by association with both the TREX-2 and the SAGA complexes. At the promoters, SAGA is required for recruitment of the basal transcription machinery. It influences RNA polymerase II transcriptional activity through different activities such as TBP interaction and promoter selectivity, interaction with transcription activators, and chromatin modification through histone acetylation and deubiquitination. Within the SAGA complex, participates in a subcomplex required for deubiquitination of H2B and for the maintenance of steady-state H3 methylation levels. The TREX-2 complex functions in docking export-competent ribonucleoprotein particles (mRNPs) to the nuclear entrance of the nuclear pore complex (nuclear basket). TREX-2 participates in mRNA export and accurate chromatin positioning in the nucleus by tethering genes to the nuclear periphery. May also be involved in cytoplasmic mRNA decay by interaction with components of P-bodies. This Candida albicans (strain SC5314 / ATCC MYA-2876) (Yeast) protein is Transcription and mRNA export factor SUS1.